Here is a 356-residue protein sequence, read N- to C-terminus: Serpentine receptor class epsilon-29 (356 aa).

Transmembrane regions (helical) follow at residues 29–49 (IVELFSYLICAYILTLNIYII), 61–81 (ILAIPLFGIWFELIIGKLITI), 119–139 (LLIFGGFLQWHYMFTIIFGVL), 161–181 (LFIPLFLTVISQFLSISTSLA), 190–210 (FLAQLPWIICCPFSAMAYFFV), 251–271 (LVFVVLSCIALCGIGITALFY), and 281–301 (FVENFLFLHPYLSCLTAIFSV).

It belongs to the nematode receptor-like protein sre family.

It is found in the membrane. This chain is Serpentine receptor class epsilon-29 (sre-29), found in Caenorhabditis elegans.